We begin with the raw amino-acid sequence, 1288 residues long: MASVAWAVLKVLLLLPTQTWSPVGAGNPPDCDSPLASALPRSSFSSSSELSSSHGPGFSRLNRRDGAGGWTPLVSNKYQWLQIDLGERMEVTAVATQGGYGSSDWVTSYLLMFSDGGRNWKQYRREESIWGFPGNTNADSVVHYRLQPPFEARFLRFLPLAWNPRGRIGMRIEVYGCAYKSEVVYFDGQSALLYTLDKKPLKPIRDVISLKFKAMQSNGILLHREGQHGNHITLELIKGKLVFFLNSGNAKLPSTIAPVTLTLGSLLDDQHWHSVLIELLDTQVNFTVDKHTHHFQAKGDSSNLDLNFEISFGGILSPGRSRAFTRKSFHGCLENLYYNGVDVTELAKKHKPQILMMGNVSFSCPQPQTVPVTFLSSRSYLALPGNSGEDKVSVTFQFRTWNRAGHLLFGELQRGSGSFVLFLKDGKLKLSLFQAGQSPRNVTAGAGLNDGQWHSVSFSAKWSHMNVVVDDDTAVQPLVAVLIDSGDTYYFGGCLGNSSGSGCKSPLGGFQGCLRLITIGDKAVDPILVQQGALGSFRDLQIDSCGITDRCLPSYCEHGGECSQSWDTFSCDCLGTGYTGETCHSSLYEQSCEAHKHRGNPSGLYYIDADGSGPLGPFLVYCNMTADSAWTVVRHGGPDAVTLRGAPSGHPLSAVSFAYAAGAGQLRAAVNLAERCEQRLALRCGTARRPDSRDGTPLSWWVGRTNETHTSWGGSLPDAQKCTCGLEGNCIDSQYYCNCDAGQNEWTSDTIVLSQKEHLPVTQIVMTDTGQPHSEADYTLGPLLCRGDKSFWNSASFNTETSYLHFPAFHGELTADVCFFFKTTVSSGVFMENLGITDFIRIELRAPTEVTFSFDVGNGPCEVTVQSPTPFNDNQWHHVRAERNVKGASLQVDQLPQKMQPAPADGHVRLQLNSQLFIGGTATRQRGFLGCIRSLQLNGVALDLEERATVTPGVEPGCAGHCSTYGHLCRNGGRCREKRRGVTCDCAFSAYDGPFCSNEISAYFATGSSMTYHFQEHYTLSENSSSLVSSLHRDVTLTREMITLSFRTTRTPSLLLYVSSFYEEYLSVILANNGSLQIRYKLDRHQNPDAFTFDFKNMADGQLHQVKINREEAVVMVEVNQSAKKQVILSSGTEFNAVKSLILGKVLEAAGADPDTRRAATSGFTGCLSAVRFGCAAPLKAALRPSGPSRVTVRGHVAPMARCAAGAASGSPARELAPRLAGGAGRSGPVDEGEPLVNADRRDSAVIGGVIAVEIFILLCITAIAIRIYQQRKLRKENESKVSKKEEC.

The N-terminal stretch at 1–25 (MASVAWAVLKVLLLLPTQTWSPVGA) is a signal peptide. Positions 23–61 (VGAGNPPDCDSPLASALPRSSFSSSSELSSSHGPGFSRL) are disordered. The Extracellular segment spans residues 26–1245 (GNPPDCDSPL…LVNADRRDSA (1220 aa)). Positions 31-177 (CDSPLASALP…IGMRIEVYGC (147 aa)) constitute an F5/8 type C domain. 6 disulfides stabilise this stretch: C31-C177, C332-C364, C513-C545, C551-C562, C556-C571, and C573-C583. Positions 33-59 (SPLASALPRSSFSSSSELSSSHGPGFS) are enriched in low complexity. Laminin G-like domains are found at residues 183-364 (VVYF…SFSC) and 370-545 (VPVT…IDSC). N359 is a glycosylation site (N-linked (GlcNAc...) asparagine). The EGF-like 1 domain maps to 547–584 (ITDRCLPSYCEHGGECSQSWDTFSCDCLGTGYTGETCH). The 208-residue stretch at 585-792 (SSLYEQSCEA…LLCRGDKSFW (208 aa)) folds into the Fibrinogen C-terminal domain. Residue N706 is glycosylated (N-linked (GlcNAc...) asparagine). A Laminin G-like 3 domain is found at 793-958 (NSASFNTETS…TVTPGVEPGC (166 aa)). Disulfide bonds link C931/C958, C962/C975, C969/C984, C986/C996, and C1167/C1203. Positions 959–997 (AGHCSTYGHLCRNGGRCREKRRGVTCDCAFSAYDGPFCS) constitute an EGF-like 2 domain. The 188-residue stretch at 1016–1203 (EHYTLSENSS…RGHVAPMARC (188 aa)) folds into the Laminin G-like 4 domain. A disordered region spans residues 1215–1236 (ELAPRLAGGAGRSGPVDEGEPL). Residues 1246–1266 (VIGGVIAVEIFILLCITAIAI) form a helical membrane-spanning segment. Topologically, residues 1267–1288 (RIYQQRKLRKENESKVSKKEEC) are cytoplasmic.

It belongs to the neurexin family.

Its subcellular location is the membrane. The protein is Contactin-associated protein-like 3B (CNTNAP3B) of Homo sapiens (Human).